The chain runs to 381 residues: Spindlin interactor and repressor of chromatin-binding protein (381 aa).

Lys-49 is covalently cross-linked (Glycyl lysine isopeptide (Lys-Gly) (interchain with G-Cter in SUMO2)). Residues Ser-122 and Ser-149 each carry the phosphoserine modification. Residues 148 to 158 (PSLPSLESGQD) show a composition bias toward polar residues. Residues 148-170 (PSLPSLESGQDGQPDPISNPDPV) form a disordered region. Glycyl lysine isopeptide (Lys-Gly) (interchain with G-Cter in SUMO2) cross-links involve residues Lys-190 and Lys-221. Disordered stretches follow at residues 203-270 (PVTP…TDGS), 285-320 (LRTT…LRGT), and 335-381 (AVSL…GSGV). Over residues 219–229 (RWKESPENEPA) the composition is skewed to basic and acidic residues. Phosphoserine occurs at positions 249 and 252. Positions 288 to 299 (TDCKDSSKDSRA) are enriched in basic and acidic residues. Glycyl lysine isopeptide (Lys-Gly) (interchain with G-Cter in SUMO2) cross-links involve residues Lys-291 and Lys-295. The span at 304 to 315 (PQPQNPSSASPP) shows a compositional bias: low complexity. Residues Ser-310 and Ser-313 each carry the phosphoserine modification.

As to quaternary structure, interacts with SPIN1, SPIN2A, SPIN2B, SPIN3 and SPIN4. Interacts with TCF7L2 in a SPIN1-dependent manner. Interacts with PARP1; promoting PARP1 ADP-ribosyltransferase activity.

The protein localises to the nucleus. The protein resides in the chromosome. Chromatin protein that stabilizes SPIN1 and enhances its association with histone H3 trimethylated at both 'Lys-4' and 'Lys-9' (H3K4me3K9me3). Positively regulates poly-ADP-ribosylation in response to DNA damage; acts by facilitating PARP1 ADP-ribosyltransferase activity. This is Spindlin interactor and repressor of chromatin-binding protein from Mus musculus (Mouse).